The primary structure comprises 333 residues: MQISVNEFLTPRHIDVQVVSPTRAKITLEPLERGFGHTLGNALRRILLSSMPGCAVVEAEIDGVLHEYSAIEGVQEDVIEILLNLKGLAIKLHGRDEVTLTLSKKGSGVVTAADIQLDHDVEIVNPDHVIANLASNGVLNMKLTVARGRGYEPADSRQSDEDESRSIGRLQLDSSFSPVRRIAYVVENARVEQRTNLDKLVIDLETNGTLDPEEAIRRAATILQQQLAAFVDLKGDSEPVVIEQEDEIDPILLRPVDDLELTVRSANCLKAENIYYIGDLIQRTEVELLKTPNLGKKSLTEIKDVLASRGLSLGMRLDNWPPASLKKDDKATA.

The tract at residues 1–234 (MQISVNEFLT…QQLAAFVDLK (234 aa)) is alpha N-terminal domain (alpha-NTD). An alpha C-terminal domain (alpha-CTD) region spans residues 248 to 333 (IDPILLRPVD…SLKKDDKATA (86 aa)).

Belongs to the RNA polymerase alpha chain family. Homodimer. The RNAP catalytic core consists of 2 alpha, 1 beta, 1 beta' and 1 omega subunit. When a sigma factor is associated with the core the holoenzyme is formed, which can initiate transcription.

It catalyses the reaction RNA(n) + a ribonucleoside 5'-triphosphate = RNA(n+1) + diphosphate. In terms of biological role, DNA-dependent RNA polymerase catalyzes the transcription of DNA into RNA using the four ribonucleoside triphosphates as substrates. This Pseudomonas syringae pv. tomato (strain ATCC BAA-871 / DC3000) protein is DNA-directed RNA polymerase subunit alpha.